A 471-amino-acid polypeptide reads, in one-letter code: Delta(24(24(1)))-sterol reductase erg4A (471 aa).

A glycan (N-linked (GlcNAc...) asparagine) is linked at Asn15. The next 8 membrane-spanning stretches (helical) occupy residues 33–53 (VTLI…GAVL), 89–109 (WTIY…LPGV), 130–150 (AVSS…TGVL), 159–179 (FGPL…VAYI), 216–236 (MFFE…GTAL), 244–264 (LVAG…NACA), 282–302 (GFML…HCTL), and 313–333 (HWNP…YWVW). Residues Lys340, Arg344, Leu380, and 392–393 (HY) contribute to the NADP(+) site. Residues 397 to 417 (VFFAISWGLITGFNSPFPWFY) form a helical membrane-spanning segment. NADP(+) contacts are provided by residues Asp432, 436-440 (CRERY), and Tyr447.

This sequence belongs to the ERG4/ERG24 family.

The protein resides in the endoplasmic reticulum membrane. It carries out the reaction ergosterol + NADP(+) = ergosta-5,7,22,24(28)-tetraen-3beta-ol + NADPH + H(+). The protein operates within steroid metabolism; ergosterol biosynthesis. Delta(24(24(1)))-sterol reductase; part of the third module of ergosterol biosynthesis pathway that includes the late steps of the pathway. Catalyzes the last step of ergosterol biosynthesis by converting ergosta-5,7,22,24(28)-tetraen-3beta-ol into ergosterol. The third module or late pathway involves the ergosterol synthesis itself through consecutive reactions that mainly occur in the endoplasmic reticulum (ER) membrane. Firstly, the squalene synthase erg9 catalyzes the condensation of 2 farnesyl pyrophosphate moieties to form squalene, which is the precursor of all steroids. Squalene synthase is crucial for balancing the incorporation of farnesyl diphosphate (FPP) into sterol and nonsterol isoprene synthesis. Secondly, squalene is converted into lanosterol by the consecutive action of the squalene epoxidase erg1 and the lanosterol synthase erg7. Then, the delta(24)-sterol C-methyltransferase erg6 methylates lanosterol at C-24 to produce eburicol. Eburicol is the substrate of the sterol 14-alpha demethylase encoded by cyp51A and cyp51B, to yield 4,4,24-trimethyl ergosta-8,14,24(28)-trienol. The C-14 reductase erg24 then reduces the C14=C15 double bond which leads to 4,4-dimethylfecosterol. A sequence of further demethylations at C-4, involving the C-4 demethylation complex containing the C-4 methylsterol oxidases erg25A or erg25B, the sterol-4-alpha-carboxylate 3-dehydrogenase erg26 and the 3-keto-steroid reductase erg27, leads to the production of fecosterol via 4-methylfecosterol. The C-8 sterol isomerase erg2 then catalyzes the reaction which results in unsaturation at C-7 in the B ring of sterols and thus converts fecosterol to episterol. The sterol-C5-desaturase erg3B then catalyzes the introduction of a C-5 double bond in the B ring to produce 5-dehydroepisterol. The 2 other sterol-C5-desaturases, erg3A and erg3C, seem to be less important in ergosterol biosynthesis. The C-22 sterol desaturase erg5 further converts 5-dehydroepisterol into ergosta-5,7,22,24(28)-tetraen-3beta-ol by forming the C-22(23) double bond in the sterol side chain. Finally, ergosta-5,7,22,24(28)-tetraen-3beta-ol is substrate of the C-24(28) sterol reductases erg4A and erg4B to produce ergosterol. Possible alternative sterol biosynthetic pathways might exist from fecosterol to ergosterol, depending on the activities of the erg3 isoforms. The chain is Delta(24(24(1)))-sterol reductase erg4A from Aspergillus fumigatus (strain ATCC MYA-4609 / CBS 101355 / FGSC A1100 / Af293) (Neosartorya fumigata).